Reading from the N-terminus, the 124-residue chain is Probable dihydroneopterin aldolase (124 aa).

Substrate-binding positions include Glu23, Tyr56, and 75 to 76; that span reads IE. The active-site Proton donor/acceptor is Lys103.

Belongs to the DHNA family.

It catalyses the reaction 7,8-dihydroneopterin = 6-hydroxymethyl-7,8-dihydropterin + glycolaldehyde. Its pathway is cofactor biosynthesis; tetrahydrofolate biosynthesis; 2-amino-4-hydroxy-6-hydroxymethyl-7,8-dihydropteridine diphosphate from 7,8-dihydroneopterin triphosphate: step 3/4. Its function is as follows. Catalyzes the conversion of 7,8-dihydroneopterin to 6-hydroxymethyl-7,8-dihydropterin. This chain is Probable dihydroneopterin aldolase (folB), found in Chlamydia trachomatis serovar D (strain ATCC VR-885 / DSM 19411 / UW-3/Cx).